The following is a 365-amino-acid chain: Glycosyltransferase 8 domain-containing protein 1 (365 aa).

At Met-1 to Arg-4 the chain is on the cytoplasmic side. A helical; Signal-anchor for type II membrane protein membrane pass occupies residues Arg-5–Leu-22. Over His-23–Lys-365 the chain is Lumenal. N-linked (GlcNAc...) asparagine glycosylation is found at Asn-102, Asn-181, Asn-245, and Asn-253.

Belongs to the glycosyltransferase 8 family.

The protein localises to the membrane. In Danio rerio (Zebrafish), this protein is Glycosyltransferase 8 domain-containing protein 1 (glt8d1).